Reading from the N-terminus, the 132-residue chain is Fatty acid-binding protein, brain (132 aa).

Val-2 bears the N-acetylvaline mark. Residue 127–129 (RCY) coordinates a fatty acid.

The protein belongs to the calycin superfamily. Fatty-acid binding protein (FABP) family. In terms of tissue distribution, expressed in brain and other neural tissues.

It localises to the cytoplasm. Its function is as follows. B-FABP could be involved in the transport of a so far unknown hydrophobic ligand with potential morphogenic activity during CNS development. It is required for the establishment of the radial glial fiber system in developing brain, a system that is necessary for the migration of immature neurons to establish cortical layers. The chain is Fatty acid-binding protein, brain (Fabp7) from Mus musculus (Mouse).